A 143-amino-acid polypeptide reads, in one-letter code: Putative pre-16S rRNA nuclease (143 aa).

The protein belongs to the YqgF nuclease family.

The protein resides in the cytoplasm. Could be a nuclease involved in processing of the 5'-end of pre-16S rRNA. In Ralstonia pickettii (strain 12J), this protein is Putative pre-16S rRNA nuclease.